We begin with the raw amino-acid sequence, 428 residues long: MGVWLKNGMSFNKDGELMRTHIKIEHGTIAAILYEQPLEANEEDVIDVGGRLIVPGLIDLHVHLREPGGEAKETIETGTLAAAKGGFTTVAAMPNTNPAPDRKEQMEWLQARIRETARVNVLPYAAITIGQKGEELTDFAALKEAGAFAFTDDGVGVQSAGMMFEAMKQAAALDMAIVAHCEDDTLTNGGAVHDGEFARRYGLRGIPSVCEAVHIARDVLLAEAAGCHYHVCHISTKESVRVVRDAKRAGIRVTAEVTPHHLLLCDEDIPGLDANYKMNPPLRSREDRDALIEGLLDGTIDFIATDHAPHTAAEKAKGIEAAPFGIVGLETAFPLLYTHFVKTGVFTLKQLVDWLTIKPAQCFGLKAGRLAVGAPADIAVIDLETEEAIDPETFASKGKNTPFAGWVCQGWPVMTFVGGTLVWEKGRA.

Zn(2+) contacts are provided by H61 and H63. Residues 63 to 65 (HLR) and N95 each bind substrate. Positions 153, 180, and 233 each coordinate Zn(2+). N279 provides a ligand contact to substrate. D306 contacts Zn(2+). Residue D306 is part of the active site. Substrate-binding positions include H310 and 324 to 325 (FG).

This sequence belongs to the metallo-dependent hydrolases superfamily. DHOase family. Class I DHOase subfamily. Zn(2+) is required as a cofactor.

The catalysed reaction is (S)-dihydroorotate + H2O = N-carbamoyl-L-aspartate + H(+). Its pathway is pyrimidine metabolism; UMP biosynthesis via de novo pathway; (S)-dihydroorotate from bicarbonate: step 3/3. In terms of biological role, catalyzes the reversible cyclization of carbamoyl aspartate to dihydroorotate. This chain is Dihydroorotase, found in Geobacillus kaustophilus (strain HTA426).